The sequence spans 311 residues: Ribosomal RNA small subunit methyltransferase H (311 aa).

Residues 33-35 (GGH), Asp-53, Phe-77, Asp-98, and Gln-105 contribute to the S-adenosyl-L-methionine site.

The protein belongs to the methyltransferase superfamily. RsmH family.

The protein resides in the cytoplasm. The catalysed reaction is cytidine(1402) in 16S rRNA + S-adenosyl-L-methionine = N(4)-methylcytidine(1402) in 16S rRNA + S-adenosyl-L-homocysteine + H(+). Specifically methylates the N4 position of cytidine in position 1402 (C1402) of 16S rRNA. This chain is Ribosomal RNA small subunit methyltransferase H, found in Thiobacillus denitrificans (strain ATCC 25259 / T1).